Here is an 85-residue protein sequence, read N- to C-terminus: Protein WIR1B (85 aa).

Residues 1 to 12 (MASHSAAGRRPT) are Cytoplasmic-facing. A helical transmembrane segment spans residues 13–34 (ALVHIALFVAIAAVIINSSVCL). At 35–85 (GAAVHDAATSGTGALDPNVPAVPTPGGAGQPYTGRGCRTVYGCKPPAGSQP) the chain is on the extracellular side.

The protein localises to the membrane. Associated with pathogen defense. In Triticum aestivum (Wheat), this protein is Protein WIR1B (WIR1B).